The sequence spans 211 residues: Arginine exporter protein ArgO (211 aa).

Helical transmembrane passes span 1–21, 37–57, 68–88, 111–131, 147–167, and 179–199; these read MISY…PLGP, LMIA…GIFG, LLAL…FGAL, IIAT…DTFV, WFAL…ALLA, and AQRI…FQLA.

It belongs to the LysE/ArgO transporter (TC 2.A.75) family.

The protein resides in the cell inner membrane. The enzyme catalyses L-arginine(in) = L-arginine(out). Involved in the export of arginine. Important to control the intracellular level of arginine and the correct balance between arginine and lysine. This Salmonella choleraesuis (strain SC-B67) protein is Arginine exporter protein ArgO.